Reading from the N-terminus, the 335-residue chain is SLAM family member 7 (335 aa).

Residues 1–22 form the signal peptide; sequence MAGSPTCLTLIYILWQLTGSAA. The Ig-like V-type domain maps to 23–124; that stretch reads SGPVKELVGS…PSTQEYVLHV (102 aa). At 23 to 226 the chain is on the extracellular side; the sequence is SGPVKELVGS…GAADDPDSSM (204 aa). N-linked (GlcNAc...) asparagine glycosylation is found at Asn98, Asn142, Asn148, Asn172, Asn176, and Asn204. Positions 131–206 constitute an Ig-like C2-type domain; it reads PKVTMGLQSN…ARNPVSRNFS (76 aa). 2 disulfides stabilise this stretch: Cys145–Cys215 and Cys151–Cys195. A helical membrane pass occupies residues 227-247; sequence VLLCLLLVPLLLSLFVLGLFL. Topologically, residues 248–335 are cytoplasmic; it reads WFLKRERQEE…PRLFAYENVI (88 aa). The interval 278–296 is interaction with FYN when phosphorylated at Tyr-284; the sequence is SGENTEYDTIPHTNRTILK. Positions 302-307 match the ITSM motif; that stretch reads TVYSTV.

In terms of assembly, isoform 1 binds to SH2D1A when its cytoplasmic tail is phosphorylated in the presence of FYN (in vitro); low affinity binding, the physiological relevance of the interaction is questioned. Interacts with SH2D1B; in NK cells. Interacts (via ITSM phosphorylated on Tyr-302) with SH2D1B, PTPN6/SHP-1, PTPN11/SHP-2, INPP5D/SHIP1, CSK and FYN. Expressed in spleen, lymph node, peripheral blood leukocytes, bone marrow, small intestine, stomach, appendix, lung and trachea. Expression was detected in NK cells, activated B-cells, NK-cell line but not in promyelocytic, B-, or T-cell lines. Expressed in monocytes. Isoform 3 is expressed at much lower level than isoform 1.

The protein localises to the membrane. Functionally, self-ligand receptor of the signaling lymphocytic activation molecule (SLAM) family. SLAM receptors triggered by homo- or heterotypic cell-cell interactions are modulating the activation and differentiation of a wide variety of immune cells and thus are involved in the regulation and interconnection of both innate and adaptive immune response. Activities are controlled by presence or absence of small cytoplasmic adapter proteins, SH2D1A/SAP and/or SH2D1B/EAT-2. Isoform 1 mediates NK cell activation through a SH2D1A-independent extracellular signal-regulated ERK-mediated pathway. Positively regulates NK cell functions by a mechanism dependent on phosphorylated SH2D1B. Downstream signaling implicates PLCG1, PLCG2 and PI3K. In addition to heterotypic NK cells-target cells interactions also homotypic interactions between NK cells may contribute to activation. However, in the absence of SH2D1B, inhibits NK cell function. Also acts inhibitory in T-cells. May play a role in lymphocyte adhesion. In LPS-activated monocytes negatively regulates production of pro-inflammatory cytokines. Isoform 3 does not mediate any NK cell activation. The protein is SLAM family member 7 (SLAMF7) of Homo sapiens (Human).